We begin with the raw amino-acid sequence, 232 residues long: Ribonuclease 3 (232 aa).

Positions 6-133 (FNDIENRLGV…VIAAVYLDKG (128 aa)) constitute an RNase III domain. A Mg(2+)-binding site is contributed by Glu-46. Asp-50 is an active-site residue. Mg(2+)-binding residues include Asp-119 and Glu-122. The active site involves Glu-122. The 70-residue stretch at 160-229 (DFKTKLQELL…AKEALKRLEK (70 aa)) folds into the DRBM domain.

Belongs to the ribonuclease III family. As to quaternary structure, homodimer. Mg(2+) is required as a cofactor.

Its subcellular location is the cytoplasm. It carries out the reaction Endonucleolytic cleavage to 5'-phosphomonoester.. Its function is as follows. Digests double-stranded RNA. Involved in the processing of primary rRNA transcript to yield the immediate precursors to the large and small rRNAs (23S and 16S). Processes some mRNAs, and tRNAs when they are encoded in the rRNA operon. Processes pre-crRNA and tracrRNA of type II CRISPR loci if present in the organism. This Clostridium botulinum (strain Alaska E43 / Type E3) protein is Ribonuclease 3.